The chain runs to 358 residues: Zinc-type alcohol dehydrogenase-like protein YogA (358 aa).

Belongs to the zinc-containing alcohol dehydrogenase family. Quinone oxidoreductase subfamily.

It participates in secondary metabolite biosynthesis. Functionally, zinc-type alcohol dehydrogenase-like protein; part of the gene cluster that mediates the biosynthesis of phomenoic acid, a long chain aliphatic carboxylic acid that does not appear to be essential for pathogenicity but may play a role in allowing to outcompete other fungi in the environmental niche via its antifungal properties. The polyketide synthase produces the long methylated aliphatic carboxylic acid chain of phomenoic acid. The cluster-specific cytochrome P450 monooxygenase may then hydroxylate the methyl group of carbon 31. The putative dehydrogenase YogA, which has no obvious role in phomenoic acid biosynthesis, may further modify phomenoic acid to produce a compound not identified yet. The polypeptide is Zinc-type alcohol dehydrogenase-like protein YogA (Leptosphaeria maculans (strain JN3 / isolate v23.1.3 / race Av1-4-5-6-7-8) (Blackleg fungus)).